The primary structure comprises 90 residues: Barrier-to-autointegration factor-like protein (90 aa).

Homodimer. Heterodimerizes with BANF1.

It is found in the nucleus. It localises to the cytoplasm. Its function is as follows. May play a role in BANF1 regulation and influence tissue-specific roles of BANF1. This Mus musculus (Mouse) protein is Barrier-to-autointegration factor-like protein (Banf2).